We begin with the raw amino-acid sequence, 384 residues long: Lipid-A-disaccharide synthase 1 (384 aa).

This sequence belongs to the LpxB family.

The catalysed reaction is a lipid X + a UDP-2-N,3-O-bis[(3R)-3-hydroxyacyl]-alpha-D-glucosamine = a lipid A disaccharide + UDP + H(+). The protein operates within bacterial outer membrane biogenesis; LPS lipid A biosynthesis. Functionally, condensation of UDP-2,3-diacylglucosamine and 2,3-diacylglucosamine-1-phosphate to form lipid A disaccharide, a precursor of lipid A, a phosphorylated glycolipid that anchors the lipopolysaccharide to the outer membrane of the cell. This chain is Lipid-A-disaccharide synthase 1, found in Legionella pneumophila (strain Lens).